Reading from the N-terminus, the 67-residue chain is uncharacterized protein (67 aa).

This is an uncharacterized protein from Escherichia coli (Bacteriophage T4).